A 135-amino-acid polypeptide reads, in one-letter code: ATP synthase epsilon chain (135 aa).

Belongs to the ATPase epsilon chain family. F-type ATPases have 2 components, CF(1) - the catalytic core - and CF(0) - the membrane proton channel. CF(1) has five subunits: alpha(3), beta(3), gamma(1), delta(1), epsilon(1). CF(0) has three main subunits: a, b and c.

The protein resides in the cell inner membrane. Its function is as follows. Produces ATP from ADP in the presence of a proton gradient across the membrane. This Desulforapulum autotrophicum (strain ATCC 43914 / DSM 3382 / VKM B-1955 / HRM2) (Desulfobacterium autotrophicum) protein is ATP synthase epsilon chain.